Here is a 313-residue protein sequence, read N- to C-terminus: 3-ketodihydrosphingosine reductase TSC10 (313 aa).

Residue leucine 12 coordinates NADP(+). Glycine 15, serine 17, and glycine 19 together coordinate NADPH. A GXSXG motif is present at residues 15-19 (GGSQG). Residue leucine 20 coordinates NADP(+). NADPH-binding residues include arginine 47, lysine 51, and aspartate 86. Position 86 (aspartate 86) interacts with NADP(+). The Proton donor role is filled by serine 160. The NADP(+) site is built by tyrosine 174, lysine 178, and serine 207. Tyrosine 174 (proton acceptor) is an active-site residue. Lysine 178 (lowers pKa of active site Tyr) is an active-site residue. A helical transmembrane segment spans residues 278-298 (VFSWILGALLNITIVPIYMLI).

Belongs to the short-chain dehydrogenases/reductases (SDR) family.

It localises to the endoplasmic reticulum membrane. It carries out the reaction sphinganine + NADP(+) = 3-oxosphinganine + NADPH + H(+). The protein operates within lipid metabolism; sphingolipid metabolism. In terms of biological role, catalyzes the reduction of 3'-oxosphinganine (3-ketodihydrosphingosine/KDS) to sphinganine (dihydrosphingosine/DHS), the second step of de novo sphingolipid biosynthesis. The chain is 3-ketodihydrosphingosine reductase TSC10 (TSC10) from Kluyveromyces lactis (strain ATCC 8585 / CBS 2359 / DSM 70799 / NBRC 1267 / NRRL Y-1140 / WM37) (Yeast).